The sequence spans 801 residues: Transferrin receptor protein 2 (801 aa).

Residues 1–83 (MERLWGLFQR…WAAAGRRAAP (83 aa)) lie on the Cytoplasmic side of the membrane. The disordered stretch occupies residues 16-45 (PRSSQTVYQRVEGPRKGHLEEEEEDGEEGA). An Endocytosis signal motif is present at residues 23 to 26 (YQRV). Positions 35–45 (EEEEEDGEEGA) are enriched in acidic residues. Residues 84-104 (YLVLTALLIFTGAFLLGYVAF) form a helical; Signal-anchor for type II membrane protein membrane-spanning segment. Over 105–801 (RGSCQACGDS…GDVWNIDNNF (697 aa)) the chain is Extracellular. 4 N-linked (GlcNAc...) asparagine glycosylation sites follow: asparagine 240, asparagine 339, asparagine 540, and asparagine 754.

The protein belongs to the peptidase M28 family. M28B subfamily. As to quaternary structure, homodimer. Predominantly expressed in liver. While the alpha form is also expressed in spleen, lung, muscle, prostate and peripheral blood mononuclear cells, the beta form is expressed in all tissues tested, albeit weakly.

The protein localises to the cell membrane. The protein resides in the cytoplasm. In terms of biological role, mediates cellular uptake of transferrin-bound iron in a non-iron dependent manner. May be involved in iron metabolism, hepatocyte function and erythrocyte differentiation. In Homo sapiens (Human), this protein is Transferrin receptor protein 2 (TFR2).